Here is a 524-residue protein sequence, read N- to C-terminus: Dihydromonacolin L monooxygenase mokC (524 aa).

Residues 1–25 (MTVPTDTVSRRLQSLAWSDIKQHAP) are Cytoplasmic-facing. A helical; Signal-anchor for type II membrane protein transmembrane segment spans residues 26–47 (WLPSSRTLVSGFLCLILLQILY). Residues 48 to 524 (SRGRKSDLRV…LMMRRRDEDL (477 aa)) are Lumenal-facing. N-linked (GlcNAc...) asparagine glycans are attached at residues asparagine 396 and asparagine 401. Position 467 (cysteine 467) interacts with heme.

This sequence belongs to the cytochrome P450 family. Heme is required as a cofactor.

The protein localises to the endoplasmic reticulum membrane. The enzyme catalyses dihydromonacolin L carboxylate + reduced [NADPH--hemoprotein reductase] + O2 = monacolin L carboxylate + oxidized [NADPH--hemoprotein reductase] + 2 H2O + H(+). It carries out the reaction monacolin L carboxylate + reduced [NADPH--hemoprotein reductase] + O2 = monacolin J carboxylate + oxidized [NADPH--hemoprotein reductase] + H2O + H(+). The protein operates within polyketide biosynthesis; lovastatin biosynthesis. Cytochrome P450 monooxygenase; part of the gene cluster that mediates the biosynthesis of monakolin K, also known as lovastatin, and which acts as a potent competitive inhibitor of HMG-CoA reductase. Monakolin K biosynthesis is performed in two stages. The first stage is catalyzed by the nonaketide synthase mokA, which belongs to type I polyketide synthases and catalyzes the iterative nine-step formation of the polyketide. This PKS stage is completed by the action of dehydrogenase mokE, which catalyzes the NADPH-dependent reduction of the unsaturated tetra-, penta- and heptaketide intermediates that arise during the mokA-mediated biosynthesis of the nonaketide chain and leads to dihydromonacolin L. Covalently bound dihydromonacolin L is released from mokA by the mokD esterase. Conversion of dihydromonacolin L into monacolin L and then monacolin J is subsequently performed with the participation of molecular oxygen and P450 monoogygenase mokC. Finally, mokF performs the conversion of monacoline J to monacoline K through the addition of the side-chain diketide moiety (2R)-2-methylbutanoate produced by the diketide synthase mokB. This is Dihydromonacolin L monooxygenase mokC from Monascus pilosus (Red mold).